A 316-amino-acid chain; its full sequence is Protein prune homolog 2 (316 aa).

Positions 1 to 24 (MDIPLDAAEIRPEPPNSLDLNGSS) are disordered. One can recognise a CRAL-TRIO domain in the interval 128–285 (IEPYKKVISH…TIVKLDEELR (158 aa)). The disordered stretch occupies residues 287 to 316 (SESPKAGCLPNEPEMNTLEEEFENKMGDND).

It is found in the cytoplasm. This Xenopus tropicalis (Western clawed frog) protein is Protein prune homolog 2 (Prune2).